A 190-amino-acid polypeptide reads, in one-letter code: Large ribosomal subunit protein eL19 (190 aa).

Disordered stretches follow at residues 56–85 and 166–190; these read TVHSRSRARALKESKRAGRHMGYGKRKGTK and NRAARERRQQRLAEKKEALFAEAAN. Basic residues predominate over residues 72-83; that stretch reads AGRHMGYGKRKG. Over residues 166–184 the composition is skewed to basic and acidic residues; the sequence is NRAARERRQQRLAEKKEAL.

It belongs to the eukaryotic ribosomal protein eL19 family. Component of the large ribosomal subunit. Mature ribosomes consist of a small (40S) and a large (60S) subunit. The 40S subunit contains about 32 different proteins and 1 molecule of RNA (18S). The 60S subunit contains 45 different proteins and 3 molecules of RNA (25S, 5.8S and 5S).

The protein resides in the cytoplasm. Component of the ribosome, a large ribonucleoprotein complex responsible for the synthesis of proteins in the cell. The small ribosomal subunit (SSU) binds messenger RNAs (mRNAs) and translates the encoded message by selecting cognate aminoacyl-transfer RNA (tRNA) molecules. The large subunit (LSU) contains the ribosomal catalytic site termed the peptidyl transferase center (PTC), which catalyzes the formation of peptide bonds, thereby polymerizing the amino acids delivered by tRNAs into a polypeptide chain. The nascent polypeptides leave the ribosome through a tunnel in the LSU and interact with protein factors that function in enzymatic processing, targeting, and the membrane insertion of nascent chains at the exit of the ribosomal tunnel. RPL19A may play a role in the last stages of translation initiation, in particular subunit joining and shedding/releasing factors. This Candida albicans (strain SC5314 / ATCC MYA-2876) (Yeast) protein is Large ribosomal subunit protein eL19.